We begin with the raw amino-acid sequence, 327 residues long: MLTYPPVKKVSVVIPVYNEQDSLPELLRRTDTACATLGRQYEILLIDDGSSDDSARMLTEAAEAEGSHVVAVLLNRNYGQHSAIMAGFSHVTGDLIITLDADLQNPPEEIPRLVEKADEGYDVVGTVRQNRQDSIFRKSASKMINRLIQRTTGKAMGDYGCMLRAYRRHIIDAMLNCHERSTFIPILANTFARRAVEIPVMHAEREFGDSKYSFMRLINLMYDLVTCLTTTPLRLLSIFGSVIALLGFAFGLLLVVLRLAFGPQWAAEGVFMLFAVLFMFIGAQFIGMGLLGEYIGRIYNDVRARPRYFIQRVVRQPETASKEEDRS.

2 helical membrane-spanning segments follow: residues 236–256 (LSIF…LLVV) and 270–290 (VFML…GMGL).

It belongs to the glycosyltransferase 2 family.

It is found in the cell inner membrane. The catalysed reaction is UDP-4-deoxy-4-formamido-beta-L-arabinose + di-trans,octa-cis-undecaprenyl phosphate = 4-deoxy-4-formamido-alpha-L-arabinopyranosyl di-trans,octa-cis-undecaprenyl phosphate + UDP. Its pathway is glycolipid biosynthesis; 4-amino-4-deoxy-alpha-L-arabinose undecaprenyl phosphate biosynthesis; 4-amino-4-deoxy-alpha-L-arabinose undecaprenyl phosphate from UDP-4-deoxy-4-formamido-beta-L-arabinose and undecaprenyl phosphate: step 1/2. It functions in the pathway bacterial outer membrane biogenesis; lipopolysaccharide biosynthesis. In terms of biological role, catalyzes the transfer of 4-deoxy-4-formamido-L-arabinose from UDP to undecaprenyl phosphate. The modified arabinose is attached to lipid A and is required for resistance to polymyxin and cationic antimicrobial peptides. In Klebsiella pneumoniae (strain 342), this protein is Undecaprenyl-phosphate 4-deoxy-4-formamido-L-arabinose transferase.